Consider the following 538-residue polypeptide: MTGDTDPPKQSRTQYGSISSSPSPGPPQVPPGGTYLSEKIPIPNAEPGTFSLRKLWAFTGPGFLMSIAYLDPGNIQSDLQAGAVAGFKLLWVLLWATVLGLLCQRLAARLGVVTGKDLGEICHLYYPKVPRTLLWLNMELAIVGSDMQEVIGTAIAFNLLSAGRIPLWGGVLITVVDTFFFLYLNNYGLRKLEAFFAFLIAIMAFTFGYEYVVARPAQGALLRGLFLPSCSGCGQPELLQAVGIVGAIIMPHNIYLHSALVKSREVDRTRREDIREANMYFLIESTIALFVSFFINLFVMAVFGQAFYQQTNQAAFNICANSSLHDYAKIFPRNNLTVAVDFYQGGVILGCLFGPAALYIWAVGLLAAGQSSTMTGTYAGQFVMEGFLKLRWSRFARLLLTRSCAILPALLVAVFKELQDLSSLNDLLNVLQSLLLPFAVLPILTFTSMPALMQEFASGRVNKVITSSIMLLVCAINFYFLVSYLPSLPHPAYFGLVALLAVIYLGLTTYLVWTCLIAHGATLLVHSSHQHFLYGLLE.

The interval 1–36 is disordered; it reads MTGDTDPPKQSRTQYGSISSSPSPGPPQVPPGGTYL. Over 1–54 the chain is Cytoplasmic; sequence MTGDTDPPKQSRTQYGSISSSPSPGPPQVPPGGTYLSEKIPIPNAEPGTFSLRK. The chain crosses the membrane as a helical span at residues 55-75; the sequence is LWAFTGPGFLMSIAYLDPGNI. Over 76 to 81 the chain is Extracellular; that stretch reads QSDLQA. The chain crosses the membrane as a helical span at residues 82–102; that stretch reads GAVAGFKLLWVLLWATVLGLL. Residues 103–139 are Cytoplasmic-facing; the sequence is CQRLAARLGVVTGKDLGEICHLYYPKVPRTLLWLNME. The helical transmembrane segment at 140-160 threads the bilayer; that stretch reads LAIVGSDMQEVIGTAIAFNLL. The Extracellular portion of the chain corresponds to 161 to 164; it reads SAGR. A helical membrane pass occupies residues 165 to 185; sequence IPLWGGVLITVVDTFFFLYLN. Residues 186-193 lie on the Cytoplasmic side of the membrane; sequence NYGLRKLE. A helical transmembrane segment spans residues 194–214; the sequence is AFFAFLIAIMAFTFGYEYVVA. Over 215–240 the chain is Extracellular; sequence RPAQGALLRGLFLPSCSGCGQPELLQ. A helical transmembrane segment spans residues 241–261; that stretch reads AVGIVGAIIMPHNIYLHSALV. The Cytoplasmic portion of the chain corresponds to 262–286; that stretch reads KSREVDRTRREDIREANMYFLIEST. Residues 287 to 307 form a helical membrane-spanning segment; it reads IALFVSFFINLFVMAVFGQAF. The Extracellular portion of the chain corresponds to 308-346; that stretch reads YQQTNQAAFNICANSSLHDYAKIFPRNNLTVAVDFYQGG. N321 and N335 each carry an N-linked (GlcNAc...) asparagine glycan. The helical transmembrane segment at 347–367 threads the bilayer; the sequence is VILGCLFGPAALYIWAVGLLA. The Cytoplasmic portion of the chain corresponds to 368 to 394; the sequence is AGQSSTMTGTYAGQFVMEGFLKLRWSR. A helical transmembrane segment spans residues 395–415; that stretch reads FARLLLTRSCAILPALLVAVF. Topologically, residues 416 to 432 are extracellular; sequence KELQDLSSLNDLLNVLQ. A helical transmembrane segment spans residues 433–453; that stretch reads SLLLPFAVLPILTFTSMPALM. At 454-468 the chain is on the cytoplasmic side; sequence QEFASGRVNKVITSS. The helical transmembrane segment at 469–489 threads the bilayer; it reads IMLLVCAINFYFLVSYLPSLP. At 490 to 492 the chain is on the extracellular side; sequence HPA. Residues 493–513 form a helical membrane-spanning segment; that stretch reads YFGLVALLAVIYLGLTTYLVW. Residues 514–538 are Cytoplasmic-facing; it reads TCLIAHGATLLVHSSHQHFLYGLLE.

Belongs to the NRAMP family.

It is found in the late endosome membrane. It localises to the lysosome membrane. The enzyme catalyses Zn(2+)(in) + H(+)(out) = Zn(2+)(out) + H(+)(in). The catalysed reaction is Fe(2+)(in) + H(+)(out) = Fe(2+)(out) + H(+)(in). It carries out the reaction Mn(2+)(in) + H(+)(out) = Mn(2+)(out) + H(+)(in). Functionally, macrophage-specific antiporter that fluxes metal ions in either direction against a proton gradient. Localized to late endosomal lysosomal membranes, delivers bivalent cations from the cytosol into these acidic compartments where they may directly affect antimicrobial activity. Involved in iron metabolism and host natural resistance to infection with intracellular parasites. Pathogen resistance involves sequestration of Fe(2+) and Mn(2+), cofactors of both prokaryotic and eukaryotic catalases and superoxide dismutases, not only to protect the macrophage against its own generation of reactive oxygen species, but to deny the cations to the pathogen for synthesis of its protective enzymes. In Sus scrofa (Pig), this protein is Natural resistance-associated macrophage protein 1 (SLC11A1).